The chain runs to 618 residues: uncharacterized protein (618 aa).

The interval 1–45 is disordered; it reads MSSKSASKLKREAKKAERLAAKGESVKPSKKNGTKNGKDKEVDGV. 2 stretches are compositionally biased toward basic and acidic residues: residues 14-27 and 36-45; these read KKAE…ESVK and NGKDKEVDGV. Residues S50 and S53 each carry the phosphoserine modification. T54 is modified (phosphothreonine). Phosphoserine occurs at positions 55 and 64. ABC transporter domains follow at residues 76–325 and 388–609; these read IKID…LKQQ and IAFN…QSRD. ATP-binding positions include 108-115 and 423-430; these read GDNGSGKS and GKNGTGKS.

It belongs to the ABC transporter superfamily.

It localises to the cytoplasm. This is an uncharacterized protein from Schizosaccharomyces pombe (strain 972 / ATCC 24843) (Fission yeast).